The following is a 1060-amino-acid chain: DNA-directed RNA polymerase subunit beta (1060 aa).

It belongs to the RNA polymerase beta chain family. As to quaternary structure, in plastids the minimal PEP RNA polymerase catalytic core is composed of four subunits: alpha, beta, beta', and beta''. When a (nuclear-encoded) sigma factor is associated with the core the holoenzyme is formed, which can initiate transcription.

It is found in the plastid. The protein localises to the chloroplast. It carries out the reaction RNA(n) + a ribonucleoside 5'-triphosphate = RNA(n+1) + diphosphate. In terms of biological role, DNA-dependent RNA polymerase catalyzes the transcription of DNA into RNA using the four ribonucleoside triphosphates as substrates. The polypeptide is DNA-directed RNA polymerase subunit beta (Helianthus annuus (Common sunflower)).